Here is a 390-residue protein sequence, read N- to C-terminus: Probable inactive secreted aspartyl protease (390 aa).

A signal peptide spans 1–20 (MQLTIKALVGILTTISAATA). A propeptide spans 21–69 (VSFDMENLGAEKRGVSGEELHMLHGNEVLARFANGVYPEVANGTRVSKR) (removed in mature form). N-linked (GlcNAc...) asparagine glycosylation is present at asparagine 62. Residues 86–388 (WAVKAKIGSN…KFDSNEMQIA (303 aa)) enclose the Peptidase A1 domain. Residues aspartate 104 and aspartate 273 contribute to the active site. A disulfide bridge links cysteine 313 with cysteine 346.

Belongs to the peptidase A1 family.

It localises to the secreted. In terms of biological role, probable inactive secreted aspartyl protease. May promote an inflammatory immune response in the host when the host skin barrier is breached. Has no detectable protease activity in vitro on fluorogenic substrates, a peptide library, or with the general protease substrate casein. The presence of the enzyme also does not affect the activity of the secreted aspartyl protease SAP1. In Malassezia globosa (strain ATCC MYA-4612 / CBS 7966) (Dandruff-associated fungus), this protein is Probable inactive secreted aspartyl protease.